We begin with the raw amino-acid sequence, 248 residues long: NAD(P)H-quinone oxidoreductase subunit K 1 (248 aa).

A propeptide spanning residues 1–2 (MS) is cleaved from the precursor. [4Fe-4S] cluster contacts are provided by cysteine 62, cysteine 63, cysteine 127, and cysteine 158. The tract at residues 228-248 (MGMPVPPALTTSQQKEQLNRG) is disordered. A compositionally biased stretch (polar residues) spans 236-248 (LTTSQQKEQLNRG).

It belongs to the complex I 20 kDa subunit family. As to quaternary structure, NDH-1 can be composed of about 15 different subunits; different subcomplexes with different compositions have been identified which probably have different functions. [4Fe-4S] cluster is required as a cofactor.

The protein resides in the cellular thylakoid membrane. The catalysed reaction is a plastoquinone + NADH + (n+1) H(+)(in) = a plastoquinol + NAD(+) + n H(+)(out). It catalyses the reaction a plastoquinone + NADPH + (n+1) H(+)(in) = a plastoquinol + NADP(+) + n H(+)(out). In terms of biological role, NDH-1 shuttles electrons from an unknown electron donor, via FMN and iron-sulfur (Fe-S) centers, to quinones in the respiratory and/or the photosynthetic chain. The immediate electron acceptor for the enzyme in this species is believed to be plastoquinone. Couples the redox reaction to proton translocation, and thus conserves the redox energy in a proton gradient. Cyanobacterial NDH-1 also plays a role in inorganic carbon-concentration. This Synechocystis sp. (strain ATCC 27184 / PCC 6803 / Kazusa) protein is NAD(P)H-quinone oxidoreductase subunit K 1.